A 407-amino-acid polypeptide reads, in one-letter code: O-methyltransferase verK (407 aa).

S-adenosyl-L-methionine-binding positions include Glu263 and 295–297 (GDF). The Proton acceptor role is filled by His314.

It belongs to the class I-like SAM-binding methyltransferase superfamily. Cation-independent O-methyltransferase family.

The protein operates within mycotoxin biosynthesis. Its function is as follows. O-methyltransferase; part of the gene cluster that mediates the biosynthesis of 11'-deoxyverticillin A, one of the dimeric epipolythiodioxopiperazines (ETPs) from the verticillin family that act as mycotoxins. 11'-deoxyverticillin A is required for normal conidiation. The nonribosomal peptide synthetase verP is speculated to be responsible for condensation of amino acids to form the carbon skeleton of verticillin, whereas the cluster-specific tailoring enzymes are involved in further modifications leading to the production of 11'-deoxyverticillin A. This chain is O-methyltransferase verK, found in Clonostachys rogersoniana.